Consider the following 622-residue polypeptide: Probable potassium transport system protein Kup (622 aa).

The next 12 helical transmembrane spans lie at 8–28 (LAAL…TSVL), 50–70 (ILSI…VVLV), 103–123 (LAVG…TPAI), 137–157 (PHFK…LFAV), 168–188 (FFGP…LAHI), 203–223 (ALGF…AVVL), 247–267 (WFGV…ALLL), 285–305 (ALIP…QALI), 337–357 (IYMP…VVMF), 366–386 (AYGI…FFVI), 393–413 (PLAL…AFFA), and 419–439 (LFQG…LMMT).

This sequence belongs to the HAK/KUP transporter (TC 2.A.72) family.

The protein resides in the cell inner membrane. It carries out the reaction K(+)(in) + H(+)(in) = K(+)(out) + H(+)(out). Its function is as follows. Transport of potassium into the cell. Likely operates as a K(+):H(+) symporter. The chain is Probable potassium transport system protein Kup from Verminephrobacter eiseniae (strain EF01-2).